We begin with the raw amino-acid sequence, 142 residues long: MAQKPTSTGPSQRQQRVAELVRHALAEVLQRGDIQDPVLGTHVVTVPEVRMSPDLKLATAYVMPLGGLDEAPVIAALERHRKVLRQAVARRVNLKFAPELRFRRDETFDEAARIDRLLRDERVQRDLDSAPEDDEPETGTGH.

Residues 123-142 (VQRDLDSAPEDDEPETGTGH) are disordered. A compositionally biased stretch (acidic residues) spans 129 to 142 (SAPEDDEPETGTGH).

This sequence belongs to the RbfA family. As to quaternary structure, monomer. Binds 30S ribosomal subunits, but not 50S ribosomal subunits or 70S ribosomes.

It is found in the cytoplasm. Its function is as follows. One of several proteins that assist in the late maturation steps of the functional core of the 30S ribosomal subunit. Associates with free 30S ribosomal subunits (but not with 30S subunits that are part of 70S ribosomes or polysomes). Required for efficient processing of 16S rRNA. May interact with the 5'-terminal helix region of 16S rRNA. This Methylobacterium radiotolerans (strain ATCC 27329 / DSM 1819 / JCM 2831 / NBRC 15690 / NCIMB 10815 / 0-1) protein is Ribosome-binding factor A.